A 220-amino-acid chain; its full sequence is Octanoyltransferase (220 aa).

Residues 27-208 (PGTADEIWLC…QLARAHGHAV (182 aa)) form the BPL/LPL catalytic domain. Substrate-binding positions include 66–73 (RGGQVTYH), 139–141 (ALG), and 152–154 (GLA). Cys-170 functions as the Acyl-thioester intermediate in the catalytic mechanism.

Belongs to the LipB family.

Its subcellular location is the cytoplasm. It carries out the reaction octanoyl-[ACP] + L-lysyl-[protein] = N(6)-octanoyl-L-lysyl-[protein] + holo-[ACP] + H(+). The protein operates within protein modification; protein lipoylation via endogenous pathway; protein N(6)-(lipoyl)lysine from octanoyl-[acyl-carrier-protein]: step 1/2. In terms of biological role, catalyzes the transfer of endogenously produced octanoic acid from octanoyl-acyl-carrier-protein onto the lipoyl domains of lipoate-dependent enzymes. Lipoyl-ACP can also act as a substrate although octanoyl-ACP is likely to be the physiological substrate. In Bordetella parapertussis (strain 12822 / ATCC BAA-587 / NCTC 13253), this protein is Octanoyltransferase.